A 230-amino-acid polypeptide reads, in one-letter code: Ureidoacrylate amidohydrolase RutB (230 aa).

Residue Asp24 is the Proton acceptor of the active site. Residue Lys133 is part of the active site. Cys166 serves as the catalytic Nucleophile.

Belongs to the isochorismatase family. RutB subfamily.

It carries out the reaction (Z)-3-ureidoacrylate + H2O + H(+) = (Z)-3-aminoacrylate + NH4(+) + CO2. The catalysed reaction is (Z)-3-ureidoacrylate + H2O = (Z)-3-aminoacrylate + carbamate + H(+). The enzyme catalyses (Z)-2-methylureidoacrylate + H2O + H(+) = (Z)-2-methylaminoacrylate + NH4(+) + CO2. In terms of biological role, hydrolyzes ureidoacrylate to form aminoacrylate and carbamate. The carbamate hydrolyzes spontaneously, thereby releasing one of the nitrogen atoms of the pyrimidine ring as ammonia and one of its carbon atoms as CO2. In Escherichia coli O81 (strain ED1a), this protein is Ureidoacrylate amidohydrolase RutB.